Reading from the N-terminus, the 219-residue chain is Thiopurine S-methyltransferase (219 aa).

S-adenosyl-L-methionine contacts are provided by W10, L45, E66, and R123.

This sequence belongs to the class I-like SAM-binding methyltransferase superfamily. TPMT family.

It is found in the cytoplasm. The catalysed reaction is S-adenosyl-L-methionine + a thiopurine = S-adenosyl-L-homocysteine + a thiopurine S-methylether.. The protein is Thiopurine S-methyltransferase of Bordetella bronchiseptica (strain ATCC BAA-588 / NCTC 13252 / RB50) (Alcaligenes bronchisepticus).